Consider the following 65-residue polypeptide: Large ribosomal subunit protein bL35 (65 aa).

This sequence belongs to the bacterial ribosomal protein bL35 family.

The sequence is that of Large ribosomal subunit protein bL35 from Thermoanaerobacter pseudethanolicus (strain ATCC 33223 / 39E) (Clostridium thermohydrosulfuricum).